The chain runs to 4749 residues: Dynein heavy chain domain-containing protein 1 (4749 aa).

Over residues methionine 1–serine 18 the composition is skewed to low complexity. Disordered regions lie at residues methionine 1–proline 27, glutamate 275–serine 308, and glutamate 2690–serine 2785. Over residues cysteine 2696–alanine 2716 the composition is skewed to acidic residues. Positions glutamine 2738 to serine 2749 are enriched in polar residues. Residues cysteine 3197 to glutamine 3224 are a coiled coil. Residues proline 3568–serine 3667 are disordered. A compositionally biased stretch (basic and acidic residues) spans serine 3578–serine 3593. The stretch at glycine 3594 to glutamate 3636 forms a coiled coil. A compositionally biased stretch (acidic residues) spans aspartate 3595–alanine 3612. The span at asparagine 3613–glycine 3628 shows a compositional bias: basic and acidic residues. Residues glutamate 3644 to glutamate 3655 show a composition bias toward low complexity. Polar residues predominate over residues threonine 3656–serine 3667. Coiled-coil stretches lie at residues methionine 3818 to glutamine 3838 and glutamate 4431 to leucine 4451.

This sequence belongs to the dynein heavy chain family. Expressed in spermatozoa (at protein level).

Its subcellular location is the cell projection. It is found in the cilium. The protein localises to the flagellum. In terms of biological role, essential for the normal function of sperm flagella axonemes. The chain is Dynein heavy chain domain-containing protein 1 (Dnhd1) from Mus musculus (Mouse).